The following is a 211-amino-acid chain: NADH-quinone oxidoreductase subunit C (211 aa).

This sequence belongs to the complex I 30 kDa subunit family. NDH-1 is composed of 14 different subunits. Subunits NuoB, C, D, E, F, and G constitute the peripheral sector of the complex.

The protein localises to the cell inner membrane. It catalyses the reaction a quinone + NADH + 5 H(+)(in) = a quinol + NAD(+) + 4 H(+)(out). Its function is as follows. NDH-1 shuttles electrons from NADH, via FMN and iron-sulfur (Fe-S) centers, to quinones in the respiratory chain. The immediate electron acceptor for the enzyme in this species is believed to be ubiquinone. Couples the redox reaction to proton translocation (for every two electrons transferred, four hydrogen ions are translocated across the cytoplasmic membrane), and thus conserves the redox energy in a proton gradient. The polypeptide is NADH-quinone oxidoreductase subunit C (Azorhizobium caulinodans (strain ATCC 43989 / DSM 5975 / JCM 20966 / LMG 6465 / NBRC 14845 / NCIMB 13405 / ORS 571)).